The sequence spans 114 residues: Small ribosomal subunit protein bS6 (114 aa).

This sequence belongs to the bacterial ribosomal protein bS6 family.

In terms of biological role, binds together with bS18 to 16S ribosomal RNA. In Hydrogenovibrio crunogenus (strain DSM 25203 / XCL-2) (Thiomicrospira crunogena), this protein is Small ribosomal subunit protein bS6.